Here is a 505-residue protein sequence, read N- to C-terminus: Deoxyguanosinetriphosphate triphosphohydrolase (505 aa).

Positions 66–273 (RLTHSLEVQQ…MEAADDISYC (208 aa)) constitute an HD domain.

Belongs to the dGTPase family. Type 1 subfamily. In terms of assembly, homotetramer. The cofactor is Mg(2+).

It catalyses the reaction dGTP + H2O = 2'-deoxyguanosine + triphosphate + H(+). DGTPase preferentially hydrolyzes dGTP over the other canonical NTPs. This Escherichia fergusonii (strain ATCC 35469 / DSM 13698 / CCUG 18766 / IAM 14443 / JCM 21226 / LMG 7866 / NBRC 102419 / NCTC 12128 / CDC 0568-73) protein is Deoxyguanosinetriphosphate triphosphohydrolase.